The chain runs to 457 residues: Phosphoglucosamine mutase (457 aa).

Ser-105 acts as the Phosphoserine intermediate in catalysis. Mg(2+)-binding residues include Ser-105, Asp-247, Asp-249, and Asp-251. Ser-105 is modified (phosphoserine).

The protein belongs to the phosphohexose mutase family. Mg(2+) serves as cofactor. Post-translationally, activated by phosphorylation.

It catalyses the reaction alpha-D-glucosamine 1-phosphate = D-glucosamine 6-phosphate. In terms of biological role, catalyzes the conversion of glucosamine-6-phosphate to glucosamine-1-phosphate. The protein is Phosphoglucosamine mutase of Protochlamydia amoebophila (strain UWE25).